Here is a 392-residue protein sequence, read N- to C-terminus: 8-amino-7-oxononanoate synthase (392 aa).

Position 26 (Arg26) interacts with substrate. 112–113 (GF) contacts pyridoxal 5'-phosphate. His137 contributes to the substrate binding site. 3 residues coordinate pyridoxal 5'-phosphate: Ser187, His215, and Thr241. Lys244 bears the N6-(pyridoxal phosphate)lysine mark. Thr357 contacts substrate.

It belongs to the class-II pyridoxal-phosphate-dependent aminotransferase family. BioF subfamily. Homodimer. Pyridoxal 5'-phosphate is required as a cofactor.

It catalyses the reaction 6-carboxyhexanoyl-[ACP] + L-alanine + H(+) = (8S)-8-amino-7-oxononanoate + holo-[ACP] + CO2. Its pathway is cofactor biosynthesis; biotin biosynthesis. Its function is as follows. Catalyzes the decarboxylative condensation of pimeloyl-[acyl-carrier protein] and L-alanine to produce 8-amino-7-oxononanoate (AON), [acyl-carrier protein], and carbon dioxide. The polypeptide is 8-amino-7-oxononanoate synthase (Photobacterium profundum (strain SS9)).